The primary structure comprises 152 residues: Superoxide dismutase [Cu-Zn] 4AP (152 aa).

Cu cation contacts are provided by His45, His47, and His62. A disulfide bond links Cys56 and Cys145. 4 residues coordinate Zn(2+): His62, His70, His79, and Asp82. His119 is a binding site for Cu cation.

The protein belongs to the Cu-Zn superoxide dismutase family. In terms of assembly, homodimer. It depends on Cu cation as a cofactor. Zn(2+) is required as a cofactor.

It is found in the cytoplasm. The catalysed reaction is 2 superoxide + 2 H(+) = H2O2 + O2. Destroys radicals which are normally produced within the cells and which are toxic to biological systems. The chain is Superoxide dismutase [Cu-Zn] 4AP (SODCC.2) from Zea mays (Maize).